Here is a 740-residue protein sequence, read N- to C-terminus: Catalase-peroxidase (740 aa).

The segment at residues 102-229 (WHAAGTYRTG…LAAIQMGLIY (128 aa)) is a cross-link (tryptophyl-tyrosyl-methioninium (Trp-Tyr) (with M-256)). The active-site Proton acceptor is the His103. The tract at residues 111–130 (GDGRGGSSSGQQRFAPLNSW) is disordered. Residues 229–256 (YVNPEGPGGDPHDPEGMARDMRETFARM) constitute a cross-link (tryptophyl-tyrosyl-methioninium (Tyr-Met) (with W-102)). Heme b is bound at residue His271.

The protein belongs to the peroxidase family. Peroxidase/catalase subfamily. As to quaternary structure, homodimer or homotetramer. The cofactor is heme b. Post-translationally, formation of the three residue Trp-Tyr-Met cross-link is important for the catalase, but not the peroxidase activity of the enzyme.

The catalysed reaction is H2O2 + AH2 = A + 2 H2O. It catalyses the reaction 2 H2O2 = O2 + 2 H2O. Bifunctional enzyme with both catalase and broad-spectrum peroxidase activity. The protein is Catalase-peroxidase of Erythrobacter litoralis (strain HTCC2594).